The following is a 264-amino-acid chain: NADH-quinone oxidoreductase subunit B 1 (264 aa).

[4Fe-4S] cluster-binding residues include Cys42, Cys43, Cys108, and Cys138.

The protein belongs to the complex I 20 kDa subunit family. In terms of assembly, NDH-1 is composed of 14 different subunits. Subunits NuoB, C, D, E, F, and G constitute the peripheral sector of the complex. [4Fe-4S] cluster is required as a cofactor.

The protein resides in the cell membrane. The enzyme catalyses a quinone + NADH + 5 H(+)(in) = a quinol + NAD(+) + 4 H(+)(out). Functionally, NDH-1 shuttles electrons from NADH, via FMN and iron-sulfur (Fe-S) centers, to quinones in the respiratory chain. The immediate electron acceptor for the enzyme in this species is believed to be ubiquinone. Couples the redox reaction to proton translocation (for every two electrons transferred, four hydrogen ions are translocated across the cytoplasmic membrane), and thus conserves the redox energy in a proton gradient. The sequence is that of NADH-quinone oxidoreductase subunit B 1 from Chloroflexus aurantiacus (strain ATCC 29366 / DSM 635 / J-10-fl).